Reading from the N-terminus, the 134-residue chain is Holo-[acyl-carrier-protein] synthase (134 aa).

Residues Asp8 and Glu57 each contribute to the Mg(2+) site.

This sequence belongs to the P-Pant transferase superfamily. AcpS family. Requires Mg(2+) as cofactor.

The protein resides in the cytoplasm. The enzyme catalyses apo-[ACP] + CoA = holo-[ACP] + adenosine 3',5'-bisphosphate + H(+). Functionally, transfers the 4'-phosphopantetheine moiety from coenzyme A to a Ser of acyl-carrier-protein. The protein is Holo-[acyl-carrier-protein] synthase of Agrobacterium fabrum (strain C58 / ATCC 33970) (Agrobacterium tumefaciens (strain C58)).